A 326-amino-acid polypeptide reads, in one-letter code: Adenosine receptor A1 (326 aa).

Topologically, residues 1 to 10 (MPPAISAFQA) are extracellular. The helical transmembrane segment at 11–33 (AYIGIEVLIALVSVPGNVLVIWA) threads the bilayer. At 34–46 (VKVNQALRDATFC) the chain is on the cytoplasmic side. Residues 47-69 (FIVSLAVADVAVGALVIPLAILI) traverse the membrane as a helical segment. Over 70–80 (NIGPRTYFHTC) the chain is Extracellular. Cys-80 and Cys-169 form a disulfide bridge. The chain crosses the membrane as a helical span at residues 81–102 (LMVACPVLILTQSSILALLAIA). The Cytoplasmic portion of the chain corresponds to 103–123 (VDRYLRVKIPLRYKTVVTPRR). A helical transmembrane segment spans residues 124 to 146 (AAVAIAGCWILSFVVGLTPLFGW). Over 147–176 (NRLGEAQRAWAANGSGGEPVIKCEFEKVIS) the chain is Extracellular. An N-linked (GlcNAc...) asparagine glycan is attached at Asn-159. A helical transmembrane segment spans residues 177–201 (MEYMVYFNFFVWVLPPLLLMVLIYL). At 202 to 235 (EVFYLIRRQLGKKVSASSGDPQKYYGKELKIAKS) the chain is on the cytoplasmic side. Residues 236 to 259 (LALILFLFALSWLPLHILNCITLF) form a helical membrane-spanning segment. Topologically, residues 260 to 267 (CPSCRKPS) are extracellular. The chain crosses the membrane as a helical span at residues 268 to 292 (ILMYIAIFLTHGNSAMNPIVYAFRI). Residues 293–326 (QKFRVTFLKIWNDHFRCQPTPPVDEDPPEEAPHD) lie on the Cytoplasmic side of the membrane. A lipid anchor (S-palmitoyl cysteine) is attached at Cys-309.

Belongs to the G-protein coupled receptor 1 family.

It is found in the cell membrane. Receptor for adenosine. The activity of this receptor is mediated by G proteins which inhibit adenylyl cyclase. The protein is Adenosine receptor A1 (ADORA1) of Canis lupus familiaris (Dog).